Consider the following 329-residue polypeptide: Glycerol-3-phosphate dehydrogenase [NAD(P)+] (329 aa).

Positions 15, 35, and 107 each coordinate NADPH. Lys-107, Gly-135, and Ser-137 together coordinate sn-glycerol 3-phosphate. Position 139 (Ala-139) interacts with NADPH. Positions 190, 243, 253, 254, and 255 each coordinate sn-glycerol 3-phosphate. Lys-190 serves as the catalytic Proton acceptor. Position 254 (Arg-254) interacts with NADPH. 2 residues coordinate NADPH: Leu-276 and Glu-278.

This sequence belongs to the NAD-dependent glycerol-3-phosphate dehydrogenase family.

The protein resides in the cytoplasm. It carries out the reaction sn-glycerol 3-phosphate + NAD(+) = dihydroxyacetone phosphate + NADH + H(+). The enzyme catalyses sn-glycerol 3-phosphate + NADP(+) = dihydroxyacetone phosphate + NADPH + H(+). It participates in membrane lipid metabolism; glycerophospholipid metabolism. Its function is as follows. Catalyzes the reduction of the glycolytic intermediate dihydroxyacetone phosphate (DHAP) to sn-glycerol 3-phosphate (G3P), the key precursor for phospholipid synthesis. This Rhodopseudomonas palustris (strain HaA2) protein is Glycerol-3-phosphate dehydrogenase [NAD(P)+].